The following is a 163-amino-acid chain: Small heat shock protein C1 (163 aa).

The region spanning methionine 55–asparagine 163 is the sHSP domain.

The protein belongs to the small heat shock protein (HSP20) family.

In Rickettsia typhi (strain ATCC VR-144 / Wilmington), this protein is Small heat shock protein C1 (hspC1).